We begin with the raw amino-acid sequence, 295 residues long: Defective in cullin neddylation protein 1 (295 aa).

In terms of domain architecture, UBA-like spans 8–45 (QKTKLRQFVQWTQVTEAVSLNFLAKANWNIEYAMTLYF). Residues 60–272 (VDRSNIERLF…LIDQFVDYCR (213 aa)) form the DCUN1 domain.

In terms of assembly, interacts with the cullin cul-3. Interacts with ubiquitin via its UBA-like domain. Interacts with ned-8/nedd8.

It localises to the nucleus. Its function is as follows. Required for neddylation of cullin components of SCF-type E3 ubiquitin ligase complexes. Neddylation of cullins play an essential role in the regulation of SCF-type complexes activity. Does not act by preventing deneddylation, but rather facilitates neddylation, possibly by acting with rbx-1 to recruit the Nedd8-charged E2 enzyme to the cullin component of SCF-type complexes. The polypeptide is Defective in cullin neddylation protein 1 (dcn-1) (Caenorhabditis elegans).